Consider the following 379-residue polypeptide: Putative glutamate--cysteine ligase 2 (379 aa).

Belongs to the glutamate--cysteine ligase type 2 family. YbdK subfamily.

The catalysed reaction is L-cysteine + L-glutamate + ATP = gamma-L-glutamyl-L-cysteine + ADP + phosphate + H(+). In terms of biological role, ATP-dependent carboxylate-amine ligase which exhibits weak glutamate--cysteine ligase activity. The polypeptide is Putative glutamate--cysteine ligase 2 (Mycobacterium avium (strain 104)).